The following is a 271-amino-acid chain: Orotidine 5'-phosphate decarboxylase (271 aa).

Lysine 95 functions as the Proton donor in the catalytic mechanism.

Belongs to the OMP decarboxylase family. Type 2 subfamily.

It catalyses the reaction orotidine 5'-phosphate + H(+) = UMP + CO2. Its pathway is pyrimidine metabolism; UMP biosynthesis via de novo pathway; UMP from orotate: step 2/2. The protein is Orotidine 5'-phosphate decarboxylase (pyrF) of Ralstonia nicotianae (strain ATCC BAA-1114 / GMI1000) (Ralstonia solanacearum).